The primary structure comprises 152 residues: Aspartate carbamoyltransferase regulatory chain (152 aa).

The Zn(2+) site is built by Cys-108, Cys-113, Cys-137, and Cys-140.

The protein belongs to the PyrI family. Contains catalytic and regulatory chains. Requires Zn(2+) as cofactor.

Its function is as follows. Involved in allosteric regulation of aspartate carbamoyltransferase. The sequence is that of Aspartate carbamoyltransferase regulatory chain from Neisseria meningitidis serogroup B (strain ATCC BAA-335 / MC58).